Here is a 685-residue protein sequence, read N- to C-terminus: Threonine--tRNA ligase (685 aa).

Positions 1–28 (MTSPAPEHSAAPLRVPAGTTAGTAVREA) are disordered. Residues 1–65 (MTSPAPEHSA…EVDVDVEPVA (65 aa)) enclose the TGS domain. A catalytic region spans residues 262–568 (DHRKLGTELD…LTEHYAGAFP (307 aa)). Cys-367, His-418, and His-545 together coordinate Zn(2+).

Belongs to the class-II aminoacyl-tRNA synthetase family. As to quaternary structure, homodimer. It depends on Zn(2+) as a cofactor.

It is found in the cytoplasm. The catalysed reaction is tRNA(Thr) + L-threonine + ATP = L-threonyl-tRNA(Thr) + AMP + diphosphate + H(+). Catalyzes the attachment of threonine to tRNA(Thr) in a two-step reaction: L-threonine is first activated by ATP to form Thr-AMP and then transferred to the acceptor end of tRNA(Thr). Also edits incorrectly charged L-seryl-tRNA(Thr). This is Threonine--tRNA ligase from Rhodococcus erythropolis (strain PR4 / NBRC 100887).